Here is a 165-residue protein sequence, read N- to C-terminus: Bark lectin isoform 2 (165 aa).

N-linked (GlcNAc...) asparagine glycosylation is found at Asn-27 and Asn-57. Intrachain disulfides connect Cys-33/Cys-80 and Cys-126/Cys-133.

Belongs to the protease inhibitor I3 (leguminous Kunitz-type inhibitor) family. Dimer.

In terms of biological role, glucose and N-acetylglucosamine binding lectin. Has hemagglutinating activity against human and rabbit erythrocytes which does not require divalent cations. Inhibits factor Xa and, to a lesser extent, trypsin. Does not inhibit neutrophil elastase, human plasma kallikrein, papain, human plasmin, porcine pancreatic kallikrein and bovin chymotrypsin. Has insecticidal activity against the termite species N.corniger. Induces apoptosis in prostrate cancer cell lines DU145 and PC3. In Crateva tapia (Garlic-pear tree), this protein is Bark lectin isoform 2.